A 137-amino-acid polypeptide reads, in one-letter code: Large ribosomal subunit protein uL16 (137 aa).

The segment covering 1 to 17 (MLQPKRTKFRKQQKGRN) has biased composition (basic residues). Residues 1 to 21 (MLQPKRTKFRKQQKGRNRGQA) are disordered.

Belongs to the universal ribosomal protein uL16 family. In terms of assembly, part of the 50S ribosomal subunit.

Binds 23S rRNA and is also seen to make contacts with the A and possibly P site tRNAs. The polypeptide is Large ribosomal subunit protein uL16 (Nitrosococcus oceani (strain ATCC 19707 / BCRC 17464 / JCM 30415 / NCIMB 11848 / C-107)).